The chain runs to 160 residues: Ribosomal RNA large subunit methyltransferase H (160 aa).

Residues leucine 76 and glycine 108 each contribute to the S-adenosyl-L-methionine site.

This sequence belongs to the RNA methyltransferase RlmH family. In terms of assembly, homodimer.

The protein resides in the cytoplasm. It carries out the reaction pseudouridine(1915) in 23S rRNA + S-adenosyl-L-methionine = N(3)-methylpseudouridine(1915) in 23S rRNA + S-adenosyl-L-homocysteine + H(+). Functionally, specifically methylates the pseudouridine at position 1915 (m3Psi1915) in 23S rRNA. The chain is Ribosomal RNA large subunit methyltransferase H from Bradyrhizobium sp. (strain BTAi1 / ATCC BAA-1182).